Here is a 1035-residue protein sequence, read N- to C-terminus: MGKADNYELYSVELGPGPGGDMAAKMSKKKKAGGGGGKRKEKLENMKKEMEINDHQLSVAELEQKYQTSATKGLSARLAAELLLRDGPNALRPPRGTPEYVKFARQLAGGLQCLMWVAAAICLIAFAIQASEGDLTTDDNLYLALALIAVVVVTGCFGYYQEFKSTNIIASFKNLVPQQATVIRDGDKFQINADQLVVGDLVEMKGGDRVPADIRILAAQGCKVDNSSLTGESEPQTRSPECTHESPLETRNIAFFSTMCLEGTAQGLVVNTGDRTIIGRIASLASGVENEKTPIAIEIEHFVDIIAGLAILFGATFFVVAMCIGYTFLRAMVFFMAIVVAYVPEGLLATVTVCLSLTAKRLASKNCVVKNLEAVETLGSTSVICSDKTGTLTQNRMTVSHLWFDNHIHTADTTEDQSGQTFDQSSETWRALCRVLTLCNRAAFKSGQDAVPVPKRIVIGDASETALLKFSELTLGNAMGYRDRFPKVCEIPFNSTNKFQLSIHTLEDPRDPRHLLVMKGAPERVLERCSSILIKGQELPLDEQWREAFQTAYLSLGGLGERVLGFCHLYLSEKDYPPGYAFDVEAMNFPSSGLCFAGLVSMIDPPRATVPDAVLKCRTAGIRVIMVTGDHPITAKAIAASVGIISEGSETVEDIAARLRVPVDQVNRKDARACVINGMQLKDMDPSELVEALRTHPEMVFARTSPQQKLVIVESCQRLGAIVAVTGDGVNDSPALKKADIGVAMGIAGSDAAKNAADMILLDDNFASIVTGVEQGRLIFDNLKKSIAYTLTKNIPELTPYLIYITVSVPLPLGCITILFIELCTDIFPSVSLAYEKAESDIMHLRPRNPKRDRLVNEPLAAYSYFQIGAIQSFAGFTDYFTAMAQEGWFPLLCVGLRPQWEDHHLQDLQDSYGQEWTFGQRLYQQYTCYTVFFISIEMCQIADVLIRKTRRLSAFQQGFFRNRILVIAIVFQVCIGCFLCYCPGMPNIFNFMPIRFQWWLVPMPFGLLIFVYDEIRKLGVRCCPGSWWDQELYY.

The interval 1-41 (MGKADNYELYSVELGPGPGGDMAAKMSKKKKAGGGGGKRKE) is disordered. Residues 1–98 (MGKADNYELY…NALRPPRGTP (98 aa)) lie on the Cytoplasmic side of the membrane. Phosphotyrosine occurs at positions 7 and 10. A compositionally biased stretch (basic residues) spans 26–40 (MSKKKKAGGGGGKRK). S27 carries the post-translational modification Phosphoserine. The helical transmembrane segment at 99–119 (EYVKFARQLAGGLQCLMWVAA) threads the bilayer. Residues 120–142 (AICLIAFAIQASEGDLTTDDNLY) lie on the Lumenal side of the membrane. A helical membrane pass occupies residues 143 to 163 (LALALIAVVVVTGCFGYYQEF). The Cytoplasmic portion of the chain corresponds to 164–299 (KSTNIIASFK…NEKTPIAIEI (136 aa)). Residues 300–319 (EHFVDIIAGLAILFGATFFV) form a helical membrane-spanning segment. Residues 320-331 (VAMCIGYTFLRA) lie on the Lumenal side of the membrane. A helical membrane pass occupies residues 332-349 (MVFFMAIVVAYVPEGLLA). K(+) contacts are provided by V340, A341, V343, and E345. Residues 350–783 (TVTVCLSLTA…EQGRLIFDNL (434 aa)) are Cytoplasmic-facing. D387 functions as the 4-aspartylphosphate intermediate in the catalytic mechanism. The Mg(2+) site is built by D387 and T389. S463 and S601 each carry phosphoserine. D728 and D732 together coordinate Mg(2+). A helical transmembrane segment spans residues 784–803 (KKSIAYTLTKNIPELTPYLI). Residue E797 coordinates K(+). Residues 804–813 (YITVSVPLPL) are Lumenal-facing. Residues 814–834 (GCITILFIELCTDIFPSVSLA) form a helical membrane-spanning segment. E822 contacts K(+). The Cytoplasmic segment spans residues 835–854 (YEKAESDIMHLRPRNPKRDR). Phosphoserine is present on S840. Residues 855–877 (LVNEPLAAYSYFQIGAIQSFAGF) form a helical membrane-spanning segment. The Lumenal portion of the chain corresponds to 878–929 (TDYFTAMAQEGWFPLLCVGLRPQWEDHHLQDLQDSYGQEWTFGQRLYQQYTC). A helical transmembrane segment spans residues 930–949 (YTVFFISIEMCQIADVLIRK). Topologically, residues 950–963 (TRRLSAFQQGFFRN) are cytoplasmic. Residue S954 is modified to Phosphoserine; by PKA. A helical membrane pass occupies residues 964–982 (RILVIAIVFQVCIGCFLCY). At 983 to 997 (CPGMPNIFNFMPIRF) the chain is on the lumenal side. Residues 998-1018 (QWWLVPMPFGLLIFVYDEIRK) traverse the membrane as a helical segment. Topologically, residues 1019-1035 (LGVRCCPGSWWDQELYY) are cytoplasmic.

It belongs to the cation transport ATPase (P-type) (TC 3.A.3) family. Type IIC subfamily. As to quaternary structure, the gastric H(+)/K(+) ATPase pump is composed of the catalytic alpha subunit ATP4A and the regulatory beta subunit ATP4B. Interacts (via the P-domain) with ATP4B (via N-terminus); this interaction stabilizes the lumenal-open E2 conformation state and prevents the reverse reaction of the transport cycle.

The protein localises to the apical cell membrane. Its subcellular location is the cell membrane. The enzyme catalyses K(+)(out) + ATP + H2O + H(+)(in) = K(+)(in) + ADP + phosphate + 2 H(+)(out). Functionally, the catalytic subunit of the gastric H(+)/K(+) ATPase pump which transports H(+) ions in exchange for K(+) ions across the apical membrane of parietal cells. Uses ATP as an energy source to pump H(+) ions to the gastric lumen while transporting K(+) ion from the lumen into the cell. Remarkably generates a million-fold proton gradient across the gastric parietal cell membrane, acidifying the gastric juice down to pH 1. Within a transport cycle, the transfer of a H(+) ion across the membrane is coupled to ATP hydrolysis and is associated with a transient phosphorylation that shifts the pump conformation from inward-facing (E1) to outward-facing state (E2). The release of the H(+) ion in the stomach lumen is followed by binding of K(+) ion converting the pump conformation back to the E1 state. The protein is Potassium-transporting ATPase alpha chain 1 (ATP4A) of Oryctolagus cuniculus (Rabbit).